A 983-amino-acid chain; its full sequence is Bifunctional glutamine synthetase adenylyltransferase/adenylyl-removing enzyme (983 aa).

The segment at methionine 1–alanine 468 is adenylyl removase. The segment at alanine 473–aspartate 983 is adenylyl transferase.

It belongs to the GlnE family. Requires Mg(2+) as cofactor.

The enzyme catalyses [glutamine synthetase]-O(4)-(5'-adenylyl)-L-tyrosine + phosphate = [glutamine synthetase]-L-tyrosine + ADP. It catalyses the reaction [glutamine synthetase]-L-tyrosine + ATP = [glutamine synthetase]-O(4)-(5'-adenylyl)-L-tyrosine + diphosphate. Its function is as follows. Involved in the regulation of glutamine synthetase GlnA, a key enzyme in the process to assimilate ammonia. When cellular nitrogen levels are high, the C-terminal adenylyl transferase (AT) inactivates GlnA by covalent transfer of an adenylyl group from ATP to specific tyrosine residue of GlnA, thus reducing its activity. Conversely, when nitrogen levels are low, the N-terminal adenylyl removase (AR) activates GlnA by removing the adenylyl group by phosphorolysis, increasing its activity. The regulatory region of GlnE binds the signal transduction protein PII (GlnB) which indicates the nitrogen status of the cell. This is Bifunctional glutamine synthetase adenylyltransferase/adenylyl-removing enzyme from Brucella melitensis biotype 1 (strain ATCC 23456 / CCUG 17765 / NCTC 10094 / 16M).